The primary structure comprises 219 residues: Probable N-acetyltransferase camello (219 aa).

2 consecutive transmembrane segments (helical) span residues 44 to 64 (FITF…VLAL) and 66 to 86 (SLVA…HGLA). The region spanning 62-211 (LALTSLVALL…VHQYTSFTVA (150 aa)) is the N-acetyltransferase domain.

This sequence belongs to the camello family.

Its subcellular location is the golgi apparatus membrane. Plays a role in regulation of gastrulation, possibly by controlled reduction of cell adhesion in the periblastopore region which is necessary for optimal cell motility. This chain is Probable N-acetyltransferase camello, found in Xenopus tropicalis (Western clawed frog).